Consider the following 266-residue polypeptide: Chymotrypsin-like elastase family member 1 (266 aa).

An N-terminal signal peptide occupies residues 1–16 (MLRFLVFATLVLYGHS). Residues 17 to 26 (TQDFPETNAR) constitute a propeptide, activation peptide. The 238-residue stretch at 27-264 (VVGGTEAGRN…YISWINKTIA (238 aa)) folds into the Peptidase S1 domain. Cysteines 56 and 72 form a disulfide. Catalysis depends on H71, which acts as the Charge relay system. Positions 85, 87, 90, and 95 each coordinate Ca(2+). N87 carries an N-linked (GlcNAc...) asparagine glycan. D119 functions as the Charge relay system in the catalytic mechanism. Disulfide bonds link C153/C220, C184/C200, and C210/C240. S214 acts as the Charge relay system in catalysis. N241 and N260 each carry an N-linked (GlcNAc...) asparagine glycan.

It belongs to the peptidase S1 family. Elastase subfamily. Requires Ca(2+) as cofactor.

The protein resides in the secreted. It catalyses the reaction Hydrolysis of proteins, including elastin. Preferential cleavage: Ala-|-Xaa.. In terms of biological role, serine proteases that hydrolyze many proteins in addition to elastin. This is Chymotrypsin-like elastase family member 1 (CELA1) from Macaca fascicularis (Crab-eating macaque).